The sequence spans 804 residues: Phenylalanine--tRNA ligase beta subunit (804 aa).

In terms of domain architecture, tRNA-binding spans 38 to 148 (RAAFRAFTIA…ENAPVGTSFA (111 aa)). The 76-residue stretch at 401 to 476 (HTARVIDFPV…RIHGINRIDP (76 aa)) folds into the B5 domain. Mg(2+) contacts are provided by Asp454, Asp460, Glu463, and Glu464. An FDX-ACB domain is found at 710 to 803 (SLFQSLKRDY…VAKQTGGVLR (94 aa)).

It belongs to the phenylalanyl-tRNA synthetase beta subunit family. Type 1 subfamily. As to quaternary structure, tetramer of two alpha and two beta subunits. Mg(2+) is required as a cofactor.

The protein resides in the cytoplasm. The enzyme catalyses tRNA(Phe) + L-phenylalanine + ATP = L-phenylalanyl-tRNA(Phe) + AMP + diphosphate + H(+). This is Phenylalanine--tRNA ligase beta subunit from Brucella suis biovar 1 (strain 1330).